A 159-amino-acid polypeptide reads, in one-letter code: 2-C-methyl-D-erythritol 2,4-cyclodiphosphate synthase (159 aa).

Positions 8 and 10 each coordinate a divalent metal cation. 4-CDP-2-C-methyl-D-erythritol 2-phosphate is bound by residues 8 to 10 (DVH) and 34 to 35 (HS). H42 contacts a divalent metal cation. 4-CDP-2-C-methyl-D-erythritol 2-phosphate contacts are provided by residues 56–58 (DIG), 61–65 (FPDTD), 100–106 (AQAPKML), 132–135 (TTTE), F139, and R142.

The protein belongs to the IspF family. As to quaternary structure, homotrimer. A divalent metal cation serves as cofactor.

The catalysed reaction is 4-CDP-2-C-methyl-D-erythritol 2-phosphate = 2-C-methyl-D-erythritol 2,4-cyclic diphosphate + CMP. It functions in the pathway isoprenoid biosynthesis; isopentenyl diphosphate biosynthesis via DXP pathway; isopentenyl diphosphate from 1-deoxy-D-xylulose 5-phosphate: step 4/6. In terms of biological role, involved in the biosynthesis of isopentenyl diphosphate (IPP) and dimethylallyl diphosphate (DMAPP), two major building blocks of isoprenoid compounds. Catalyzes the conversion of 4-diphosphocytidyl-2-C-methyl-D-erythritol 2-phosphate (CDP-ME2P) to 2-C-methyl-D-erythritol 2,4-cyclodiphosphate (ME-CPP) with a corresponding release of cytidine 5-monophosphate (CMP). This Salmonella typhimurium (strain LT2 / SGSC1412 / ATCC 700720) protein is 2-C-methyl-D-erythritol 2,4-cyclodiphosphate synthase.